We begin with the raw amino-acid sequence, 606 residues long: 4-hydroxy-3-methylbut-2-en-1-yl diphosphate synthase (flavodoxin) (606 aa).

Residues C513, C516, C547, and E554 each coordinate [4Fe-4S] cluster.

Belongs to the IspG family. [4Fe-4S] cluster is required as a cofactor.

The enzyme catalyses (2E)-4-hydroxy-3-methylbut-2-enyl diphosphate + oxidized [flavodoxin] + H2O + 2 H(+) = 2-C-methyl-D-erythritol 2,4-cyclic diphosphate + reduced [flavodoxin]. It functions in the pathway isoprenoid biosynthesis; isopentenyl diphosphate biosynthesis via DXP pathway; isopentenyl diphosphate from 1-deoxy-D-xylulose 5-phosphate: step 5/6. Functionally, converts 2C-methyl-D-erythritol 2,4-cyclodiphosphate (ME-2,4cPP) into 1-hydroxy-2-methyl-2-(E)-butenyl 4-diphosphate. The polypeptide is 4-hydroxy-3-methylbut-2-en-1-yl diphosphate synthase (flavodoxin) (Chlamydia caviae (strain ATCC VR-813 / DSM 19441 / 03DC25 / GPIC) (Chlamydophila caviae)).